Reading from the N-terminus, the 139-residue chain is GATA transcription factor 16 (139 aa).

The GATA-type zinc finger occupies 32–86 (NDKKKTCADCGTSKTPLWRGGPVGPKSLCNACGIRNRKKRRGGTEDNKKLKKSSS). A disordered region spans residues 67-98 (NRKKRRGGTEDNKKLKKSSSGGGNRKFGESLK).

This sequence belongs to the type IV zinc-finger family. Class B subfamily.

The protein localises to the nucleus. Functionally, transcriptional regulator that specifically binds 5'-GATA-3' or 5'-GAT-3' motifs within gene promoters. In Arabidopsis thaliana (Mouse-ear cress), this protein is GATA transcription factor 16 (GATA16).